The following is a 334-amino-acid chain: Deoxyhypusine synthase (334 aa).

NAD(+) contacts are provided by residues 73–77 (SNIIS), 99–101 (TGG), E105, and D207. 104 to 105 (EE) contacts spermidine. Spermidine is bound by residues D212 and H256. NAD(+) is bound at residue 276-277 (NA). Residues 282 to 284 (GSD) and 291 to 297 (EAVSWGK) contribute to the spermidine site. Catalysis depends on K297, which acts as the Nucleophile. An NAD(+)-binding site is contributed by 310-311 (DA).

It belongs to the deoxyhypusine synthase family. NAD(+) serves as cofactor.

The catalysed reaction is [eIF5A protein]-L-lysine + spermidine = [eIF5A protein]-deoxyhypusine + propane-1,3-diamine. Its pathway is protein modification; eIF5A hypusination. Functionally, catalyzes the NAD-dependent oxidative cleavage of spermidine and the subsequent transfer of the butylamine moiety of spermidine to the epsilon-amino group of a specific lysine residue of the eIF-5A precursor protein to form the intermediate deoxyhypusine residue. This Encephalitozoon cuniculi (strain GB-M1) (Microsporidian parasite) protein is Deoxyhypusine synthase (DYS1).